The following is a 234-amino-acid chain: Glucosamine-6-phosphate deaminase (234 aa).

Catalysis depends on Asp63, which acts as the Proton acceptor; for enolization step. Catalysis depends on Asn129, which acts as the For ring-opening step. His131 serves as the catalytic Proton acceptor; for ring-opening step. Glu136 (for ring-opening step) is an active-site residue.

Belongs to the glucosamine/galactosamine-6-phosphate isomerase family. NagB subfamily.

It catalyses the reaction alpha-D-glucosamine 6-phosphate + H2O = beta-D-fructose 6-phosphate + NH4(+). It functions in the pathway amino-sugar metabolism; N-acetylneuraminate degradation; D-fructose 6-phosphate from N-acetylneuraminate: step 5/5. In terms of biological role, catalyzes the reversible isomerization-deamination of glucosamine 6-phosphate (GlcN6P) to form fructose 6-phosphate (Fru6P) and ammonium ion. This chain is Glucosamine-6-phosphate deaminase, found in Listeria monocytogenes serotype 4a (strain HCC23).